The primary structure comprises 510 residues: Pyruvate kinase, cytosolic isozyme (510 aa).

Arg50 contributes to the substrate binding site. K(+)-binding residues include Asn52, Ser54, Asp84, and Thr85. Position 52–55 (52–55 (NFSH)) interacts with ATP. ATP is bound by residues Arg91 and Lys176. Position 242 (Glu242) interacts with Mg(2+). Substrate-binding residues include Gly265, Asp266, and Thr298. Asp266 serves as a coordination point for Mg(2+).

This sequence belongs to the pyruvate kinase family. In terms of assembly, homotetramer. The cofactor is Mg(2+). K(+) is required as a cofactor.

It is found in the cytoplasm. It carries out the reaction pyruvate + ATP = phosphoenolpyruvate + ADP + H(+). Its pathway is carbohydrate degradation; glycolysis; pyruvate from D-glyceraldehyde 3-phosphate: step 5/5. The sequence is that of Pyruvate kinase, cytosolic isozyme from Solanum tuberosum (Potato).